A 358-amino-acid polypeptide reads, in one-letter code: 3-dehydroquinate synthase (358 aa).

Residues 105-109, 129-130, Lys-142, Lys-151, and 169-172 each bind NAD(+); these read GVVGD, TT, and TLKT. Zn(2+) contacts are provided by Glu-184, His-245, and His-262.

Belongs to the sugar phosphate cyclases superfamily. Dehydroquinate synthase family. Requires NAD(+) as cofactor. The cofactor is Co(2+). Zn(2+) serves as cofactor.

The protein localises to the cytoplasm. The enzyme catalyses 7-phospho-2-dehydro-3-deoxy-D-arabino-heptonate = 3-dehydroquinate + phosphate. It participates in metabolic intermediate biosynthesis; chorismate biosynthesis; chorismate from D-erythrose 4-phosphate and phosphoenolpyruvate: step 2/7. Functionally, catalyzes the conversion of 3-deoxy-D-arabino-heptulosonate 7-phosphate (DAHP) to dehydroquinate (DHQ). The polypeptide is 3-dehydroquinate synthase (Enterococcus faecalis (strain ATCC 47077 / OG1RF)).